The chain runs to 251 residues: MAEITAQQVKELREKTGAGMMDCKRALTENAGDITKAIEWLRQKGITSAEKKASRVAAEGMIGSYIHTGSRIGVLVEVNCETDFVARREEFKKLVNDVAMQIAACPNVEYVKVADIPAEIAAKEKEIEMGRDDLANKPDNIKEKIVAGRIEKRLKELSLLDQPFIRDQNISIDELLKQAIAALGENIQVRRFQRFVLGEGIEKEETDFAAEVAAQMGQKAPEPVAAAPQVEEKAPEPAAKDNPPAKGKKKK.

The interval 82 to 85 is involved in Mg(2+) ion dislocation from EF-Tu; sequence TDFV. Residues 215 to 251 form a disordered region; the sequence is QMGQKAPEPVAAAPQVEEKAPEPAAKDNPPAKGKKKK. Over residues 219 to 229 the composition is skewed to low complexity; that stretch reads KAPEPVAAAPQ. Over residues 230-239 the composition is skewed to basic and acidic residues; the sequence is VEEKAPEPAA.

Belongs to the EF-Ts family.

The protein resides in the cytoplasm. Its function is as follows. Associates with the EF-Tu.GDP complex and induces the exchange of GDP to GTP. It remains bound to the aminoacyl-tRNA.EF-Tu.GTP complex up to the GTP hydrolysis stage on the ribosome. This is Elongation factor Ts from Microcystis aeruginosa (strain NIES-843 / IAM M-2473).